The chain runs to 238 residues: Cysteine-rich venom protein (238 aa).

Positions 1-19 (MIAFIVLLSLAAVLQQSSG) are cleaved as a signal peptide. The propeptide occupies 20–27 (TVDFASES). One can recognise an SCP domain in the interval 39-164 (KKHNALRRSV…PTKYLYVCQY (126 aa)). 8 disulfides stabilise this stretch: cysteine 75–cysteine 153, cysteine 92–cysteine 165, cysteine 148–cysteine 162, cysteine 184–cysteine 191, cysteine 187–cysteine 196, cysteine 200–cysteine 233, cysteine 209–cysteine 227, and cysteine 218–cysteine 231. In terms of domain architecture, ShKT spans 200–233 (CKREDDYSNCKSLAEKNKCMEEWMKSKCPASCFC).

It belongs to the CRISP family. As to expression, expressed by the venom gland.

The protein resides in the secreted. In terms of biological role, blocks olfactory (CNGA2) and retinal (CNGA1) cyclic nucleotide-gated (CNG) ion channel currents. Does not inhibit retinal (CNGA3) currents. It forms high-affinity contacts with the pore turret region and most likely inhibits CNG channel current by blocking the external entrance to the transmembrane pore. Does not affect neither depolarization- nor caffeine-induced contraction arterial smooth muscle. The protein is Cysteine-rich venom protein of Demansia vestigiata (Lesser black whip snake).